Consider the following 381-residue polypeptide: Bifunctional polyhydroxybutyrate synthase / ABC transporter periplasmic binding protein (381 aa).

A signal peptide spans 1–22; it reads MSKTFARSSLCALSMTIMTAHA.

This sequence belongs to the bacterial solute-binding protein PotD/PotF family.

The protein resides in the periplasm. The enzyme catalyses (3R)-3-hydroxybutanoyl-CoA + [(3R)-hydroxybutanoate](n) = [(3R)-hydroxybutanoate](n+1) + CoA. Catalyzes the formation of short polymers of R-3-hydroxybutyrate (cPHB). Involved in natural transformation. Probably part of the ABC transporter complex YdcSTUV. During natural transformation, may bind dsDNA and convey it to the inner membrane channel formed by YdcV. This chain is Bifunctional polyhydroxybutyrate synthase / ABC transporter periplasmic binding protein (ydcS), found in Escherichia coli (strain K12).